The sequence spans 135 residues: UPF0251 protein Hore_18270 (135 aa).

The protein belongs to the UPF0251 family.

The polypeptide is UPF0251 protein Hore_18270 (Halothermothrix orenii (strain H 168 / OCM 544 / DSM 9562)).